The sequence spans 147 residues: Ubiquitin-conjugating enzyme E2 4 (147 aa).

The UBC core domain occupies 1-147; it reads MALKRINREL…AREWTRKYAI (147 aa). The Glycyl thioester intermediate role is filled by Cys-85.

The protein belongs to the ubiquitin-conjugating enzyme family. As to quaternary structure, interacts with the E1 ubiquitin-activating enzyme ptr3 and E3 ubiquitin-protein ligase pub2.

It catalyses the reaction S-ubiquitinyl-[E1 ubiquitin-activating enzyme]-L-cysteine + [E2 ubiquitin-conjugating enzyme]-L-cysteine = [E1 ubiquitin-activating enzyme]-L-cysteine + S-ubiquitinyl-[E2 ubiquitin-conjugating enzyme]-L-cysteine.. It functions in the pathway protein modification; protein ubiquitination. In terms of biological role, E2 ubiquitin-conjugating enzyme that catalyzes the covalent attachment of ubiquitin to other proteins. Mediates the selective degradation of short-lived and abnormal proteins. Mediates ubiquitination of pex5. This is Ubiquitin-conjugating enzyme E2 4 (ubc4) from Schizosaccharomyces pombe (strain 972 / ATCC 24843) (Fission yeast).